A 233-amino-acid chain; its full sequence is Small ribosomal subunit protein uS3 (233 aa).

The region spanning 39 to 107 is the KH type-2 domain; the sequence is VRQFLTKELS…PAQINIAEVR (69 aa).

Belongs to the universal ribosomal protein uS3 family. As to quaternary structure, part of the 30S ribosomal subunit. Forms a tight complex with proteins S10 and S14.

In terms of biological role, binds the lower part of the 30S subunit head. Binds mRNA in the 70S ribosome, positioning it for translation. The sequence is that of Small ribosomal subunit protein uS3 from Vibrio vulnificus (strain CMCP6).